A 210-amino-acid polypeptide reads, in one-letter code: Nucleoside triphosphate pyrophosphatase (210 aa).

The active-site Proton acceptor is Asp79.

It belongs to the Maf family. Requires a divalent metal cation as cofactor.

The protein localises to the cytoplasm. It carries out the reaction a ribonucleoside 5'-triphosphate + H2O = a ribonucleoside 5'-phosphate + diphosphate + H(+). The enzyme catalyses a 2'-deoxyribonucleoside 5'-triphosphate + H2O = a 2'-deoxyribonucleoside 5'-phosphate + diphosphate + H(+). Nucleoside triphosphate pyrophosphatase. May have a dual role in cell division arrest and in preventing the incorporation of modified nucleotides into cellular nucleic acids. This chain is Nucleoside triphosphate pyrophosphatase, found in Mycolicibacterium paratuberculosis (strain ATCC BAA-968 / K-10) (Mycobacterium paratuberculosis).